We begin with the raw amino-acid sequence, 385 residues long: MRLDQRWLIARVIMRSAIGFFASFTVSSGVLAANVLADPADDALAKLNELSRQAEQTTEALHSAQLDLNEKLAAQRAADQKLADNRTALDAARARLATFQTAVNKVAAATYMGGRTHGMDAILTAESPQLLIDRLSVQRVMAHQMSTQMARFKAAGEQAVKAEQAAAKSAADARSAAEQAAAVRANLQHKQSQLQVQIAVVKSQYVALTPEERTALADPGPVPAVAAIAPGAPPAALPPGAPPGDGPAPGVAPPPGGMPGLPFVQPDGAGGDRTAVVQAALTQVGAPYAWGGAAPGGFDCSGLVMWAFQQAGIALPHSSQALAHGGQPVALSDLQPGDVLTFYSDASHAGIYIGDGLMVHSSTYGVPVRVVPMDSSGPIYDARRY.

The segment covering 235–257 has biased composition (pro residues); it reads AALPPGAPPGDGPAPGVAPPPGG. The tract at residues 235–268 is disordered; that stretch reads AALPPGAPPGDGPAPGVAPPPGGMPGLPFVQPDG. Positions 270-385 constitute a NlpC/P60 domain; the sequence is GGDRTAVVQA…SGPIYDARRY (116 aa). Cysteine 300 acts as the Nucleophile in catalysis. Histidine 348 serves as the catalytic Proton acceptor. Histidine 360 is a catalytic residue.

This sequence belongs to the peptidase C40 family.

This chain is Probable endopeptidase MT2245, found in Mycobacterium tuberculosis (strain CDC 1551 / Oshkosh).